A 463-amino-acid polypeptide reads, in one-letter code: Cysteine--tRNA ligase (463 aa).

Cys33 provides a ligand contact to Zn(2+). Positions Pro35–Asn45 match the 'HIGH' region motif. Residues Cys221, His246, and Glu250 each coordinate Zn(2+). A 'KMSKS' region motif is present at residues Lys279–Ser283. Lys282 is a binding site for ATP.

Belongs to the class-I aminoacyl-tRNA synthetase family. Monomer. It depends on Zn(2+) as a cofactor.

Its subcellular location is the cytoplasm. The catalysed reaction is tRNA(Cys) + L-cysteine + ATP = L-cysteinyl-tRNA(Cys) + AMP + diphosphate. The sequence is that of Cysteine--tRNA ligase from Rhizobium rhizogenes (strain K84 / ATCC BAA-868) (Agrobacterium radiobacter).